The chain runs to 278 residues: Probable 3-hydroxybutyryl-CoA dehydrogenase (278 aa).

The protein belongs to the 3-hydroxyacyl-CoA dehydrogenase family.

The enzyme catalyses (3S)-3-hydroxybutanoyl-CoA + NADP(+) = acetoacetyl-CoA + NADPH + H(+). The protein operates within lipid metabolism; butanoate metabolism. This chain is Probable 3-hydroxybutyryl-CoA dehydrogenase (hbd), found in Deinococcus radiodurans (strain ATCC 13939 / DSM 20539 / JCM 16871 / CCUG 27074 / LMG 4051 / NBRC 15346 / NCIMB 9279 / VKM B-1422 / R1).